Consider the following 65-residue polypeptide: Large ribosomal subunit protein bL35 (65 aa).

Belongs to the bacterial ribosomal protein bL35 family.

The polypeptide is Large ribosomal subunit protein bL35 (Nostoc sp. (strain PCC 7120 / SAG 25.82 / UTEX 2576)).